The primary structure comprises 531 residues: Zinc finger protein 692 (531 aa).

Basic and acidic residues predominate over residues 155–178 (EAQGLECEQRERTQETRLSRRVDS). Disordered regions lie at residues 155 to 249 (EAQG…PATL) and 287 to 307 (MTES…PTWD). The segment covering 186 to 206 (LGEDQDVEEEEEEEEEEEELL) has biased composition (acidic residues). Position 231 is a phosphoserine (S231). Positions 290-303 (SLESPGSQAQSAPN) are enriched in polar residues. 5 C2H2-type zinc fingers span residues 327–352 (MPCD…KYQH), 358–382 (FCCP…VKLH), 388–410 (YICE…RRIH), 416–438 (LQCE…RRKH), and 447–470 (FPCE…SKSH). Position 469 is a phosphoserine (S469). A disordered region spans residues 474-531 (LPAQEPPGSLVSSPSISAPESLQSPEGASISTTSDSNPASSTSISSPGVPDPRNREKS). Positions 483–499 (LVSSPSISAPESLQSPE) are enriched in polar residues. Residues 502 to 520 (SISTTSDSNPASSTSISSP) show a composition bias toward low complexity.

This sequence belongs to the krueppel C2H2-type zinc-finger protein family. Phosphorylation at Ser-469 results in loss of DNA-binding activity.

It is found in the nucleus. May act as an transcriptional repressor for PCK1 gene expression, in turn may participate in the hepatic gluconeogenesis regulation through the activated AMPK signaling pathway. The protein is Zinc finger protein 692 of Mus musculus (Mouse).